A 414-amino-acid chain; its full sequence is Serine/threonine transporter SstT (414 aa).

Transmembrane regions (helical) follow at residues 16 to 36 (GSLV…AWVS), 46 to 66 (LGTL…LMLV), 84 to 104 (ILFL…VFSF), 143 to 163 (ALLN…GFAL), 180 to 200 (AVTF…FGLV), 219 to 239 (LVVL…LLVF), 300 to 320 (MAGA…TLGV), and 332 to 352 (VVAS…LLLI).

It belongs to the dicarboxylate/amino acid:cation symporter (DAACS) (TC 2.A.23) family.

The protein localises to the cell inner membrane. It carries out the reaction L-serine(in) + Na(+)(in) = L-serine(out) + Na(+)(out). The enzyme catalyses L-threonine(in) + Na(+)(in) = L-threonine(out) + Na(+)(out). Its function is as follows. Involved in the import of serine and threonine into the cell, with the concomitant import of sodium (symport system). This Salmonella arizonae (strain ATCC BAA-731 / CDC346-86 / RSK2980) protein is Serine/threonine transporter SstT.